The primary structure comprises 69 residues: Neurotoxin Cex7 (69 aa).

Alanine 1 is a signal peptide. In terms of domain architecture, LCN-type CS-alpha/beta spans 2–67 (REGYLVSKST…TYPIPGKSCG (66 aa)). Disulfide bonds link cysteine 13-cysteine 66, cysteine 17-cysteine 42, cysteine 26-cysteine 47, and cysteine 30-cysteine 49. Cysteine 66 carries the post-translational modification Cysteine amide. A propeptide spanning residues 67–69 (GKK) is cleaved from the precursor.

This sequence belongs to the long (4 C-C) scorpion toxin superfamily. Sodium channel inhibitor family. Beta subfamily. In terms of tissue distribution, expressed by the venom gland.

The protein localises to the secreted. In terms of biological role, beta toxins bind voltage-independently at site-4 of sodium channels (Nav) and shift the voltage of activation toward more negative potentials thereby affecting sodium channel activation and promoting spontaneous and repetitive firing. The protein is Neurotoxin Cex7 of Centruroides exilicauda (Bark scorpion).